The chain runs to 320 residues: Lipoyl synthase (320 aa).

Positions 67, 72, 78, 93, 97, 100, and 307 each coordinate [4Fe-4S] cluster. Residues 79–296 (FNHGTATFMI…REKANEMGFE (218 aa)) form the Radical SAM core domain.

Belongs to the radical SAM superfamily. Lipoyl synthase family. Requires [4Fe-4S] cluster as cofactor.

The protein resides in the cytoplasm. It carries out the reaction [[Fe-S] cluster scaffold protein carrying a second [4Fe-4S](2+) cluster] + N(6)-octanoyl-L-lysyl-[protein] + 2 oxidized [2Fe-2S]-[ferredoxin] + 2 S-adenosyl-L-methionine + 4 H(+) = [[Fe-S] cluster scaffold protein] + N(6)-[(R)-dihydrolipoyl]-L-lysyl-[protein] + 4 Fe(3+) + 2 hydrogen sulfide + 2 5'-deoxyadenosine + 2 L-methionine + 2 reduced [2Fe-2S]-[ferredoxin]. It functions in the pathway protein modification; protein lipoylation via endogenous pathway; protein N(6)-(lipoyl)lysine from octanoyl-[acyl-carrier-protein]: step 2/2. Its function is as follows. Catalyzes the radical-mediated insertion of two sulfur atoms into the C-6 and C-8 positions of the octanoyl moiety bound to the lipoyl domains of lipoate-dependent enzymes, thereby converting the octanoylated domains into lipoylated derivatives. In Glaesserella parasuis serovar 5 (strain SH0165) (Haemophilus parasuis), this protein is Lipoyl synthase.